Consider the following 470-residue polypeptide: MAAEKIETVVAGNYLEMEREEENISGNKKSSTKTKLSNFFWHGGSVYDAWFSCASNQVAQVLLTLPYSFSQLGMMSGILFQLFYGLMGSWTAYLISVLYVEYRTRKEREKFDFRNHVIQWFEVLDGLLGKHWRNLGLIFNCTFLLFGSVIQLIACASNIYYINDKLDKRTWTYIFGACCATTVFIPSFHNYRIWSFLGLAMTTYTSWYLTIASLLHGQAEDVKHSGPTTMVLYFTGATNILYTFGGHAVTVEIMHAMWKPQKFKAIYLLATIYVLTLTLPSASAVYWAFGDKLLTHSNALSLLPKTGFRDTAVILMLIHQFITFGFASTPLYFVWEKLIGVHETKSMFKRAMARLPVVVPIWFLAIIFPFFGPINSAVGSLLVSFTVYIIPALAHMLTFAPAPSRENAVERPPRVVGGWMGTYCINIFVVVWVFVVGFGFGGWASMVNFVRQIDTFGLFTKCYQCPPHKP.

At 1-57 (MAAEKIETVVAGNYLEMEREEENISGNKKSSTKTKLSNFFWHGGSVYDAWFSCASNQ) the chain is on the cytoplasmic side. Residues 58–75 (VAQVLLTLPYSFSQLGMM) form a helical membrane-spanning segment. Residues 76–77 (SG) are Extracellular-facing. A helical transmembrane segment spans residues 78–98 (ILFQLFYGLMGSWTAYLISVL). Topologically, residues 99–134 (YVEYRTRKEREKFDFRNHVIQWFEVLDGLLGKHWRN) are cytoplasmic. Residues 135–155 (LGLIFNCTFLLFGSVIQLIAC) traverse the membrane as a helical segment. At 156–170 (ASNIYYINDKLDKRT) the chain is on the extracellular side. A helical membrane pass occupies residues 171 to 191 (WTYIFGACCATTVFIPSFHNY). Position 192 (arginine 192) is a topological domain, cytoplasmic. A helical transmembrane segment spans residues 193–213 (IWSFLGLAMTTYTSWYLTIAS). Residues 214–230 (LLHGQAEDVKHSGPTTM) are Extracellular-facing. A helical transmembrane segment spans residues 231–251 (VLYFTGATNILYTFGGHAVTV). Residues 252–264 (EIMHAMWKPQKFK) are Cytoplasmic-facing. Residues 265–285 (AIYLLATIYVLTLTLPSASAV) traverse the membrane as a helical segment. Topologically, residues 286-312 (YWAFGDKLLTHSNALSLLPKTGFRDTA) are extracellular. A helical transmembrane segment spans residues 313 to 333 (VILMLIHQFITFGFASTPLYF). Residues 334–354 (VWEKLIGVHETKSMFKRAMAR) lie on the Cytoplasmic side of the membrane. The helical transmembrane segment at 355 to 375 (LPVVVPIWFLAIIFPFFGPIN) threads the bilayer. A topological domain (extracellular) is located at residue serine 376. The chain crosses the membrane as a helical span at residues 377 to 397 (AVGSLLVSFTVYIIPALAHML). Residues 398-426 (TFAPAPSRENAVERPPRVVGGWMGTYCIN) are Cytoplasmic-facing. The helical transmembrane segment at 427 to 447 (IFVVVWVFVVGFGFGGWASMV) threads the bilayer. Over 448–470 (NFVRQIDTFGLFTKCYQCPPHKP) the chain is Extracellular.

Belongs to the amino acid/polyamine transporter 2 family. Amino acid/auxin permease (AAAP) (TC 2.A.18.1) subfamily.

The protein localises to the cell membrane. Its function is as follows. Carrier protein involved in proton-driven auxin influx. Mediates the formation of auxin gradient from developing leaves (site of auxin biosynthesis) to tips by contributing to the loading of auxin in vascular tissues and facilitating acropetal (base to tip) auxin transport within inner tissues of the root apex, and basipetal (tip to base) auxin transport within outer tissues of the root apex. The protein is Auxin transporter-like protein 3 (LAX3) of Arabidopsis thaliana (Mouse-ear cress).